Here is a 513-residue protein sequence, read N- to C-terminus: GMP synthase [glutamine-hydrolyzing] (513 aa).

A Glutamine amidotransferase type-1 domain is found at 9-198; that stretch reads LILVLDFGSQ…VRRVCDCIGE (190 aa). Cys-86 serves as the catalytic Nucleophile. Residues His-172 and Glu-174 contribute to the active site. The GMPS ATP-PPase domain occupies 199-388; it reads WSMENFIEIE…LGIPEHLVWR (190 aa). 226 to 232 serves as a coordination point for ATP; the sequence is SGGVDSS.

As to quaternary structure, homodimer.

The catalysed reaction is XMP + L-glutamine + ATP + H2O = GMP + L-glutamate + AMP + diphosphate + 2 H(+). Its pathway is purine metabolism; GMP biosynthesis; GMP from XMP (L-Gln route): step 1/1. In terms of biological role, catalyzes the synthesis of GMP from XMP. This chain is GMP synthase [glutamine-hydrolyzing], found in Staphylococcus saprophyticus subsp. saprophyticus (strain ATCC 15305 / DSM 20229 / NCIMB 8711 / NCTC 7292 / S-41).